The primary structure comprises 194 residues: Large ribosomal subunit protein bL9 (194 aa).

Positions 167–194 (EDRAAEAEAASDMAAGGAGSFEGDHYES) are disordered.

Belongs to the bacterial ribosomal protein bL9 family.

Functionally, binds to the 23S rRNA. This chain is Large ribosomal subunit protein bL9, found in Caulobacter sp. (strain K31).